The sequence spans 234 residues: Probable chemoreceptor glutamine deamidase CheD (234 aa).

The protein belongs to the CheD family.

The catalysed reaction is L-glutaminyl-[protein] + H2O = L-glutamyl-[protein] + NH4(+). Functionally, probably deamidates glutamine residues to glutamate on methyl-accepting chemotaxis receptors (MCPs), playing an important role in chemotaxis. In Burkholderia pseudomallei (strain 1710b), this protein is Probable chemoreceptor glutamine deamidase CheD.